Consider the following 1419-residue polypeptide: Collagen alpha-1(II) chain (1419 aa).

The signal sequence occupies residues 1 to 25 (MIRLGAPQSLVLLTLLIATVLQCQG). Residues 26–113 (QDARKLGPKG…PGLGGGNFAA (88 aa)) constitute a propeptide, N-terminal propeptide. Positions 28–1168 (ARKLGPKGQK…GQREKGPDPL (1141 aa)) are disordered. Basic and acidic residues-rich tracts occupy residues 36–47 (QKGEPGDIKDII) and 64–85 (PRGD…RDGE). The span at 89 to 104 (PGNPGPPGPPGPPGPP) shows a compositional bias: pro residues. Lys-122 bears the 5-hydroxylysine mark. A glycan (O-linked (Gal...) hydroxylysine) is linked at Lys-122. The span at 124–135 (GGAQMGVMQGPM) shows a compositional bias: low complexity. Residues 133 to 1146 (GPMGPMGPRG…PGPPGPPGPP (1014 aa)) are triple-helical region. Residues 140–149 (PRGPPGPAGA) are compositionally biased toward pro residues. A compositionally biased stretch (low complexity) spans 150–171 (PGPQGFQGNPGEPGEPGVSGPI). The segment covering 183-197 (PGDDGEAGKPGKAGE) has biased composition (basic and acidic residues). Lys-219, Lys-231, and Lys-240 each carry 5-hydroxylysine. O-linked (Gal...) hydroxylysine glycosylation is found at Lys-219, Lys-231, and Lys-240. Low complexity-rich tracts occupy residues 242 to 252 (ESGSPGENGSP) and 267 to 282 (TGPA…DGQP). Gly residues predominate over residues 292 to 301 (GPAGGPGFLG). Lys-306 carries the post-translational modification 5-hydroxylysine. Lys-306 is a glycosylation site (O-linked (Gal...) hydroxylysine). Residues 335–363 (PAGASGNPGTDGIPGAKGSAGAPGIAGAP) are compositionally biased toward low complexity. The span at 365–374 (FPGPRGPPGP) shows a compositional bias: pro residues. The segment covering 404–417 (ETGPAGPQGAPGPA) has biased composition (low complexity). 2 positions are modified to 5-hydroxylysine: Lys-540 and Lys-552. Residues Lys-540 and Lys-552 are each glycosylated (O-linked (Gal...) hydroxylysine). Residues 554–563 (LAGAPGLRGL) show a composition bias toward low complexity. Residues Pro-591 and Pro-600 each carry the 4-hydroxyproline modification. Pro-602 bears the 3-hydroxyproline; partial mark. A 4-hydroxyproline mark is found at Pro-603 and Pro-606. Low complexity predominate over residues 638–668 (ERGSPGAQGLQGPRGLPGTPGTDGPKGAAGP). A compositionally biased stretch (basic and acidic residues) spans 696 to 707 (KGDRGDVGEKGP). Low complexity-rich tracts occupy residues 765 to 780 (AGFA…PGAK) and 809 to 846 (PTGV…NGNP). Pro-839 bears the 3-hydroxyproline; partial mark. 4-hydroxyproline is present on residues Pro-840, Pro-846, and Pro-852. Residues 1001–1011 (APGPPGSPGPA) show a composition bias toward pro residues. Basic and acidic residues predominate over residues 1047–1061 (RGDKGEAGEPGERGL). Pro-1076 bears the 3-hydroxyproline; partial mark. Composition is skewed to low complexity over residues 1080 to 1089 (SGDQGTSGPA) and 1103 to 1113 (PSGKDGSNGIP). Pro-1113 carries the 4-hydroxyproline modification. Pro-1118 bears the 3-hydroxyproline mark. Pro-1119 bears the 4-hydroxyproline mark. The segment covering 1131 to 1148 (AGPPGNPGPPGPPGPPGP) has biased composition (pro residues). The residue at position 1133 (Pro-1133) is a 3-hydroxyproline; partial. Pro-1134 and Pro-1137 each carry 4-hydroxyproline. Pro-1139 carries the post-translational modification 3-hydroxyproline; partial. Residues Pro-1140 and Pro-1143 each carry the 4-hydroxyproline modification. A 3-hydroxyproline; partial modification is found at Pro-1145. Pro-1146 carries the post-translational modification 4-hydroxyproline. The segment at 1147 to 1173 (GPGIDMSAFAGLGQREKGPDPLQYMRA) is nonhelical region (C-terminal). The region spanning 1185–1419 (VEVDATLKSL…GVDIGPVCFL (235 aa)) is the Fibrillar collagen NC1 domain. 3 disulfides stabilise this stretch: Cys-1215-Cys-1247, Cys-1255-Cys-1417, and Cys-1325-Cys-1370. Residues Asp-1233, Asn-1235, Gln-1236, Cys-1238, and Asp-1241 each contribute to the Ca(2+) site. The N-linked (GlcNAc...) asparagine glycan is linked to Asn-1320.

This sequence belongs to the fibrillar collagen family. In terms of assembly, homotrimers of alpha 1(II) chains. Post-translationally, contains mostly 4-hydroxyproline. Prolines at the third position of the tripeptide repeating unit (G-X-P) are 4-hydroxylated in some or all of the chains. Contains 3-hydroxyproline at a few sites. This modification occurs on the first proline residue in the sequence motif Gly-Pro-Hyp, where Hyp is 4-hydroxyproline. In terms of processing, lysine residues at the third position of the tripeptide repeating unit (G-X-Y) are 5-hydroxylated in some or all of the chains. Post-translationally, O-glycosylated on hydroxylated lysine residues. The O-linked glycan consists of a Glc-Gal disaccharide. Expressed in chondrocytes.

The protein resides in the secreted. The protein localises to the extracellular space. It is found in the extracellular matrix. Type II collagen is specific for cartilaginous tissues. It is essential for the normal embryonic development of the skeleton, for linear growth and for the ability of cartilage to resist compressive forces. This Rattus norvegicus (Rat) protein is Collagen alpha-1(II) chain.